The sequence spans 195 residues: Small ribosomal subunit protein uS10c (195 aa).

A chloroplast-targeting transit peptide spans 1–59 (MATSSISAALLSPLTLRNASSSSTKQDFSTLSSLNLRRTLTPTLQSGHTLSNSSNFATF).

The protein belongs to the universal ribosomal protein uS10 family. In terms of assembly, component of the chloroplast small ribosomal subunit (SSU). Mature 70S chloroplast ribosomes of higher plants consist of a small (30S) and a large (50S) subunit. The 30S small subunit contains 1 molecule of ribosomal RNA (16S rRNA) and 24 different proteins. The 50S large subunit contains 3 rRNA molecules (23S, 5S and 4.5S rRNA) and 33 different proteins.

Its subcellular location is the plastid. It localises to the chloroplast. Functionally, component of the chloroplast ribosome (chloro-ribosome), a dedicated translation machinery responsible for the synthesis of chloroplast genome-encoded proteins, including proteins of the transcription and translation machinery and components of the photosynthetic apparatus. This is Small ribosomal subunit protein uS10c (RPS10) from Spinacia oleracea (Spinach).